A 304-amino-acid chain; its full sequence is Shiftless antiviral inhibitor of ribosomal frameshifting protein homolog (304 aa).

The short motif at 140 to 156 (RRVPQRKEVSRCHRCRK) is the Nuclear localization signal element. The Nuclear export signal motif lies at 278–287 (TENDIDDIIL).

It belongs to the SHFL family.

The protein resides in the cytoplasm. It localises to the nucleus. It is found in the P-body. Inhibits programmed -1 ribosomal frameshifting (-1PRF) of a variety of mRNAs from viruses and cellular genes. Interacts with the -1PRF signal of target mRNA and translating ribosomes and causes premature translation termination at the frameshifting site. May exhibit antiviral activity. The sequence is that of Shiftless antiviral inhibitor of ribosomal frameshifting protein homolog (shfl) from Xenopus tropicalis (Western clawed frog).